The chain runs to 470 residues: MSHHPSGLRAGFSSTSYRRTFGPPPSLSPGAFSYSSSSRFSSSRLLGSASPSSSVRLGSFRSPRAGAGALLRLPSERLDFSMAEALNQEFLATRSNEKQELQELNDRFANFIEKVRFLEQQNAALRGELSQARGQEPARADQLCQQELRELRRELELLGRERDRVQVERDGLAEDLAALKQRLEEETRKREDAEHNLVLFRKDVDDATLSRLELERKIESLMDEIEFLKKLHEEELRDLQVSVESQQVQQVEVEATVKPELTAALRDIRAQYESIAAKNLQEAEEWYKSKYADLSDAANRNHEALRQAKQEMNESRRQIQSLTCEVDGLRGTNEALLRQLRELEEQFALEAGGYQAGAARLEEELRQLKEEMARHLREYQELLNVKMALDIEIATYRKLLEGEESRISVPVHSFASLNIKTTVPEVEPPQDSHSRKTVLIKTIETRNGEVVTESQKEQRSELDKSSAHSY.

Positions 1 to 99 (MSHHPSGLRA…FLATRSNEKQ (99 aa)) are head. At tyrosine 17 the chain carries 3'-nitrotyrosine. Phosphoserine occurs at positions 28, 50, and 59. In terms of domain architecture, IF rod spans 97–407 (EKQELQELND…KLLEGEESRI (311 aa)). The tract at residues 100–132 (ELQELNDRFANFIEKVRFLEQQNAALRGELSQA) is coil 1A. Residues 133 to 143 (RGQEPARADQL) form a linker 1 region. A coil 1B region spans residues 144–239 (CQQELRELRR…KLHEEELRDL (96 aa)). Positions 240–262 (QVSVESQQVQQVEVEATVKPELT) are linker 2. Positions 263-405 (AALRDIRAQY…YRKLLEGEES (143 aa)) are coil 2. Position 379 is a 3'-nitrotyrosine (tyrosine 379). Positions 406–470 (RISVPVHSFA…ELDKSSAHSY (65 aa)) are tail. Positions 447-470 (NGEVVTESQKEQRSELDKSSAHSY) are disordered. A compositionally biased stretch (basic and acidic residues) spans 454–470 (SQKEQRSELDKSSAHSY). Residue tyrosine 470 is modified to Phosphotyrosine.

Belongs to the intermediate filament family. Forms homodimers (in vitro). Homopolymerizes into a filamentous network (in vitro). Forms heterodimers with NEFL, NEFM or NEFH (in vitro). Interacts with DST (via C-terminus). Interacts with RAB7A; the interaction is direct. Interacts with PRKCE (via phorbol-ester/DAG-type 2 domain). Post-translationally, phosphorylated; phosphorylation increases after nerve injury in regenerating neurons. In terms of tissue distribution, expressed in the neurons of the outer hair cells in the organ of Corti and to a lesser extent in type I spiral ganglion cells.

The protein resides in the cytoplasm. The protein localises to the cytoskeleton. It localises to the cell projection. Its subcellular location is the axon. It is found in the perikaryon. In terms of biological role, class-III neuronal intermediate filament protein. May form an independent structural network without the involvement of other neurofilaments or may cooperate with the neuronal intermediate filament proteins NEFL, NEFH, NEFM and INA to form a filamentous network. Assembly of the neuronal intermediate filaments may be regulated by RAB7A. Plays a role in the development of unmyelinated sensory neurons. May be involved in axon elongation and axon regeneration after injury. Inhibits neurite extension in type II spiral ganglion neurons in the cochlea. The chain is Peripherin (PRPH) from Homo sapiens (Human).